A 671-amino-acid polypeptide reads, in one-letter code: UvrABC system protein B (671 aa).

In terms of domain architecture, Helicase ATP-binding spans 26-183 (EGLENGLAHQ…RRLSELQYSR (158 aa)). 39–46 (GVTGSGKT) contacts ATP. Residues 92–115 (YYDYYQPEAYVPSSDTFIEKDASV) carry the Beta-hairpin motif. Positions 431-597 (QVDDLLSEIR…GLNKKIGDIL (167 aa)) constitute a Helicase C-terminal domain. The region spanning 631-666 (DQKIRELEAKMYTYAQNLEFEQAAELRDQVHQLRQQ) is the UVR domain.

Belongs to the UvrB family. As to quaternary structure, forms a heterotetramer with UvrA during the search for lesions. Interacts with UvrC in an incision complex.

It localises to the cytoplasm. In terms of biological role, the UvrABC repair system catalyzes the recognition and processing of DNA lesions. A damage recognition complex composed of 2 UvrA and 2 UvrB subunits scans DNA for abnormalities. Upon binding of the UvrA(2)B(2) complex to a putative damaged site, the DNA wraps around one UvrB monomer. DNA wrap is dependent on ATP binding by UvrB and probably causes local melting of the DNA helix, facilitating insertion of UvrB beta-hairpin between the DNA strands. Then UvrB probes one DNA strand for the presence of a lesion. If a lesion is found the UvrA subunits dissociate and the UvrB-DNA preincision complex is formed. This complex is subsequently bound by UvrC and the second UvrB is released. If no lesion is found, the DNA wraps around the other UvrB subunit that will check the other stand for damage. The sequence is that of UvrABC system protein B from Yersinia pseudotuberculosis serotype IB (strain PB1/+).